Reading from the N-terminus, the 211-residue chain is Large ribosomal subunit protein uL3 (211 aa).

It belongs to the universal ribosomal protein uL3 family. In terms of assembly, part of the 50S ribosomal subunit. Forms a cluster with proteins L14 and L19.

Its function is as follows. One of the primary rRNA binding proteins, it binds directly near the 3'-end of the 23S rRNA, where it nucleates assembly of the 50S subunit. This Geobacter sp. (strain M21) protein is Large ribosomal subunit protein uL3.